We begin with the raw amino-acid sequence, 267 residues long: 4-diphosphocytidyl-2-C-methyl-D-erythritol kinase (267 aa).

The active site involves Lys-8. 90–100 (PIGAGLGGGSS) contacts ATP. The active site involves Asp-132.

This sequence belongs to the GHMP kinase family. IspE subfamily.

It carries out the reaction 4-CDP-2-C-methyl-D-erythritol + ATP = 4-CDP-2-C-methyl-D-erythritol 2-phosphate + ADP + H(+). Its pathway is isoprenoid biosynthesis; isopentenyl diphosphate biosynthesis via DXP pathway; isopentenyl diphosphate from 1-deoxy-D-xylulose 5-phosphate: step 3/6. Its function is as follows. Catalyzes the phosphorylation of the position 2 hydroxy group of 4-diphosphocytidyl-2C-methyl-D-erythritol. In Azobacteroides pseudotrichonymphae genomovar. CFP2, this protein is 4-diphosphocytidyl-2-C-methyl-D-erythritol kinase.